We begin with the raw amino-acid sequence, 160 residues long: Small ribosomal subunit protein uS7 (160 aa).

This sequence belongs to the universal ribosomal protein uS7 family. As to quaternary structure, part of the 30S ribosomal subunit. Contacts proteins S9 and S11.

Functionally, one of the primary rRNA binding proteins, it binds directly to 16S rRNA where it nucleates assembly of the head domain of the 30S subunit. Is located at the subunit interface close to the decoding center, probably blocks exit of the E-site tRNA. In Ehrlichia chaffeensis (strain ATCC CRL-10679 / Arkansas), this protein is Small ribosomal subunit protein uS7.